The chain runs to 237 residues: Large ribosomal subunit protein uL1 (237 aa).

The protein belongs to the universal ribosomal protein uL1 family. In terms of assembly, part of the 50S ribosomal subunit.

In terms of biological role, binds directly to 23S rRNA. The L1 stalk is quite mobile in the ribosome, and is involved in E site tRNA release. Functionally, protein L1 is also a translational repressor protein, it controls the translation of the L11 operon by binding to its mRNA. The polypeptide is Large ribosomal subunit protein uL1 (Corynebacterium kroppenstedtii (strain DSM 44385 / JCM 11950 / CIP 105744 / CCUG 35717)).